The primary structure comprises 261 residues: MNNLFPFLALNKIALQLGPLAIHWYAIFIVGGAALAVWLACKEAPKRNIKTDDIIDFVLFAFPLGIVGARLYYVIFQWSYYSQHPSQIIAMWDGGGAIYGSLIAGAIVLFVFSYYRMIHPLDLLDITIPGVFLAQAMGRWGNFVNQEAYGKIVSNLDWLPAFIRNQMFIDGHYRMPTFLFESIGTLSGFILVMVFRHRIKGLKRGDIFSFYLVWYGAVRFIVEGMRTDSLMLGPARVSQWLSVLLVIVGLVLFIYRRMKKN.

Transmembrane regions (helical) follow at residues 20–40 (LAIH…VWLA), 54–74 (IIDF…LYYV), and 94–114 (GGGA…VFSY). Arg-139 lines the a 1,2-diacyl-sn-glycero-3-phospho-(1'-sn-glycerol) pocket. 3 helical membrane passes run 175-195 (MPTF…VMVF), 205-225 (GDIF…VEGM), and 235-255 (ARVS…LFIY).

The protein belongs to the Lgt family.

Its subcellular location is the cell membrane. It catalyses the reaction L-cysteinyl-[prolipoprotein] + a 1,2-diacyl-sn-glycero-3-phospho-(1'-sn-glycerol) = an S-1,2-diacyl-sn-glyceryl-L-cysteinyl-[prolipoprotein] + sn-glycerol 1-phosphate + H(+). Its pathway is protein modification; lipoprotein biosynthesis (diacylglyceryl transfer). Catalyzes the transfer of the diacylglyceryl group from phosphatidylglycerol to the sulfhydryl group of the N-terminal cysteine of a prolipoprotein, the first step in the formation of mature lipoproteins. This is Phosphatidylglycerol--prolipoprotein diacylglyceryl transferase from Lactococcus lactis subsp. lactis (strain IL1403) (Streptococcus lactis).